A 1035-amino-acid polypeptide reads, in one-letter code: Potassium-transporting ATPase alpha chain 1 (1035 aa).

The interval 1-41 (MGKADNYELYSVELGPGPGGDMAAKMSKKKKAGGGGGKRKE) is disordered. Residues 1 to 98 (MGKADNYELY…NALRPPRGTP (98 aa)) lie on the Cytoplasmic side of the membrane. A phosphotyrosine mark is found at Tyr7 and Tyr10. Residues 26–40 (MSKKKKAGGGGGKRK) show a composition bias toward basic residues. Ser27 bears the Phosphoserine mark. The helical transmembrane segment at 99–119 (EYVKFARQLAGGLQCLMWVAA) threads the bilayer. Residues 120–142 (AICLIAFAIQASEGDLTTDDNLY) lie on the Lumenal side of the membrane. Residues 143–163 (LALALIAVVVVTGCFGYYQEF) traverse the membrane as a helical segment. The Cytoplasmic segment spans residues 164 to 299 (KSTNIIASFK…NEKTPIAIEI (136 aa)). Residues 300–319 (EHFVDIIAGLAILFGATFFV) traverse the membrane as a helical segment. Residues 320–331 (VAMCIGYTFLRA) lie on the Lumenal side of the membrane. A helical transmembrane segment spans residues 332–349 (MVFFMAIVVAYVPEGLLA). Residues Val340, Ala341, Val343, and Glu345 each contribute to the K(+) site. At 350 to 783 (TVTVCLSLTA…EQGRLIFDNL (434 aa)) the chain is on the cytoplasmic side. The 4-aspartylphosphate intermediate role is filled by Asp387. Residues Asp387 and Thr389 each contribute to the Mg(2+) site. Ser463 and Ser601 each carry phosphoserine. Asp728 and Asp732 together coordinate Mg(2+). The chain crosses the membrane as a helical span at residues 784–803 (KKSIAYTLTKNIPELTPYLI). Glu797 provides a ligand contact to K(+). At 804-813 (YITVSVPLPL) the chain is on the lumenal side. The chain crosses the membrane as a helical span at residues 814-834 (GCITILFIELCTDIFPSVSLA). Glu822 serves as a coordination point for K(+). Over 835-854 (YEKAESDIMHLRPRNPKRDR) the chain is Cytoplasmic. A Phosphoserine modification is found at Ser840. Residues 855 to 877 (LVNEPLAAYSYFQIGAIQSFAGF) form a helical membrane-spanning segment. At 878 to 929 (TDYFTAMAQEGWFPLLCVGLRPQWEDHHLQDLQDSYGQEWTFGQRLYQQYTC) the chain is on the lumenal side. Residues 930-949 (YTVFFISIEMCQIADVLIRK) traverse the membrane as a helical segment. The Cytoplasmic segment spans residues 950 to 963 (TRRLSAFQQGFFRN). Ser954 is subject to Phosphoserine; by PKA. A helical membrane pass occupies residues 964 to 982 (RILVIAIVFQVCIGCFLCY). Topologically, residues 983–997 (CPGMPNIFNFMPIRF) are lumenal. Residues 998 to 1018 (QWWLVPMPFGLLIFVYDEIRK) form a helical membrane-spanning segment. Residues 1019–1035 (LGVRCCPGSWWDQELYY) are Cytoplasmic-facing.

The protein belongs to the cation transport ATPase (P-type) (TC 3.A.3) family. Type IIC subfamily. The gastric H(+)/K(+) ATPase pump is composed of the catalytic alpha subunit ATP4A and the regulatory beta subunit ATP4B. Interacts (via the P-domain) with ATP4B (via N-terminus); this interaction stabilizes the lumenal-open E2 conformation state and prevents the reverse reaction of the transport cycle.

The protein resides in the apical cell membrane. It is found in the cell membrane. It carries out the reaction K(+)(out) + ATP + H2O + H(+)(in) = K(+)(in) + ADP + phosphate + 2 H(+)(out). In terms of biological role, the catalytic subunit of the gastric H(+)/K(+) ATPase pump which transports H(+) ions in exchange for K(+) ions across the apical membrane of parietal cells. Uses ATP as an energy source to pump H(+) ions to the gastric lumen while transporting K(+) ion from the lumen into the cell. Remarkably generates a million-fold proton gradient across the gastric parietal cell membrane, acidifying the gastric juice down to pH 1. Within a transport cycle, the transfer of a H(+) ion across the membrane is coupled to ATP hydrolysis and is associated with a transient phosphorylation that shifts the pump conformation from inward-facing (E1) to outward-facing state (E2). The release of the H(+) ion in the stomach lumen is followed by binding of K(+) ion converting the pump conformation back to the E1 state. This chain is Potassium-transporting ATPase alpha chain 1 (ATP4A), found in Oryctolagus cuniculus (Rabbit).